The following is a 336-amino-acid chain: Biotin synthase (336 aa).

The region spanning 57–286 is the Radical SAM core domain; it reads HHGKSIDLCS…RAIVRTAGGR (230 aa). The [4Fe-4S] cluster site is built by cysteine 75, cysteine 79, and cysteine 82. Residues serine 119, cysteine 151, cysteine 211, and arginine 281 each coordinate [2Fe-2S] cluster.

Belongs to the radical SAM superfamily. Biotin synthase family. In terms of assembly, homodimer. The cofactor is [4Fe-4S] cluster. [2Fe-2S] cluster serves as cofactor.

It carries out the reaction (4R,5S)-dethiobiotin + (sulfur carrier)-SH + 2 reduced [2Fe-2S]-[ferredoxin] + 2 S-adenosyl-L-methionine = (sulfur carrier)-H + biotin + 2 5'-deoxyadenosine + 2 L-methionine + 2 oxidized [2Fe-2S]-[ferredoxin]. Its pathway is cofactor biosynthesis; biotin biosynthesis; biotin from 7,8-diaminononanoate: step 2/2. In terms of biological role, catalyzes the conversion of dethiobiotin (DTB) to biotin by the insertion of a sulfur atom into dethiobiotin via a radical-based mechanism. This is Biotin synthase from Desulfotalea psychrophila (strain LSv54 / DSM 12343).